The following is a 293-amino-acid chain: 4-hydroxy-tetrahydrodipicolinate synthase (293 aa).

T46 provides a ligand contact to pyruvate. The Proton donor/acceptor role is filled by Y133. Residue K161 is the Schiff-base intermediate with substrate of the active site. Position 202 (V202) interacts with pyruvate.

Belongs to the DapA family. Homotetramer; dimer of dimers.

It is found in the cytoplasm. It carries out the reaction L-aspartate 4-semialdehyde + pyruvate = (2S,4S)-4-hydroxy-2,3,4,5-tetrahydrodipicolinate + H2O + H(+). The protein operates within amino-acid biosynthesis; L-lysine biosynthesis via DAP pathway; (S)-tetrahydrodipicolinate from L-aspartate: step 3/4. In terms of biological role, catalyzes the condensation of (S)-aspartate-beta-semialdehyde [(S)-ASA] and pyruvate to 4-hydroxy-tetrahydrodipicolinate (HTPA). The sequence is that of 4-hydroxy-tetrahydrodipicolinate synthase from Wolbachia pipientis subsp. Culex pipiens (strain wPip).